Consider the following 81-residue polypeptide: Pyruvate synthase subunit PorD (81 aa).

4Fe-4S ferredoxin-type domains lie at 25-50 (FKPVLDKDKCIDCDNCILFCPEGCIN) and 51-80 (REHEIDYDYCKGCGICAEKCPVKAIKMERE). 8 residues coordinate [4Fe-4S] cluster: C34, C37, C40, C44, C60, C63, C66, and C70.

Heterotetramer of one alpha, one beta, one delta and one gamma chain. The cofactor is [4Fe-4S] cluster.

This is Pyruvate synthase subunit PorD (porD) from Methanothermobacter thermautotrophicus (strain ATCC 29096 / DSM 1053 / JCM 10044 / NBRC 100330 / Delta H) (Methanobacterium thermoautotrophicum).